Here is a 145-residue protein sequence, read N- to C-terminus: uncharacterized protein (145 aa).

The N-terminal stretch at 1–20 is a signal peptide; it reads MKTCTVICCTALVLGLTAYA.

This is an uncharacterized protein from Aedes vexans (Inland floodwater mosquito).